Here is a 562-residue protein sequence, read N- to C-terminus: Dihydroxy-acid dehydratase (562 aa).

[2Fe-2S] cluster is bound at residue Cys53. Residue Asp85 coordinates Mg(2+). Cys126 serves as a coordination point for [2Fe-2S] cluster. Positions 127 and 128 each coordinate Mg(2+). Lys128 is modified (N6-carboxylysine). Cys198 serves as a coordination point for [2Fe-2S] cluster. Mg(2+) is bound at residue Glu449. Ser475 (proton acceptor) is an active-site residue.

This sequence belongs to the IlvD/Edd family. Homodimer. [2Fe-2S] cluster is required as a cofactor. Mg(2+) serves as cofactor.

It catalyses the reaction (2R)-2,3-dihydroxy-3-methylbutanoate = 3-methyl-2-oxobutanoate + H2O. It carries out the reaction (2R,3R)-2,3-dihydroxy-3-methylpentanoate = (S)-3-methyl-2-oxopentanoate + H2O. The protein operates within amino-acid biosynthesis; L-isoleucine biosynthesis; L-isoleucine from 2-oxobutanoate: step 3/4. It participates in amino-acid biosynthesis; L-valine biosynthesis; L-valine from pyruvate: step 3/4. In terms of biological role, functions in the biosynthesis of branched-chain amino acids. Catalyzes the dehydration of (2R,3R)-2,3-dihydroxy-3-methylpentanoate (2,3-dihydroxy-3-methylvalerate) into 2-oxo-3-methylpentanoate (2-oxo-3-methylvalerate) and of (2R)-2,3-dihydroxy-3-methylbutanoate (2,3-dihydroxyisovalerate) into 2-oxo-3-methylbutanoate (2-oxoisovalerate), the penultimate precursor to L-isoleucine and L-valine, respectively. This is Dihydroxy-acid dehydratase from Methylococcus capsulatus (strain ATCC 33009 / NCIMB 11132 / Bath).